Reading from the N-terminus, the 166-residue chain is PTS system glucose-specific EIIA component (166 aa).

Residues 34 to 138 form the PTS EIIA type-1 domain; sequence DPVFAQKMMG…SVISPIIITN (105 aa). Zn(2+)-binding residues include His-71 and His-86. His-86 serves as the catalytic Tele-phosphohistidine intermediate; for EIIA activity. His-86 bears the Phosphohistidine; by HPr mark.

As to quaternary structure, heterodimer with glycerol kinase (glpk). Requires Zn(2+) as cofactor.

It is found in the cytoplasm. Its function is as follows. The phosphoenolpyruvate-dependent sugar phosphotransferase system (sugar PTS), a major carbohydrate active transport system, catalyzes the phosphorylation of incoming sugar substrates concomitantly with their translocation across the cell membrane. The enzyme II complex composed of PtsG and Crr is involved in glucose transport. This Staphylococcus aureus (strain COL) protein is PTS system glucose-specific EIIA component (crr).